The following is a 1407-amino-acid chain: Clustered mitochondria protein (1407 aa).

Over residues 1–12 (MAGKSNKSKAKR) the composition is skewed to basic residues. Disordered regions lie at residues 1 to 36 (MAGK…PVAA) and 83 to 103 (IPKA…PKQG). A compositionally biased stretch (polar residues) spans 14–24 (AQSTTTNSTTD). Residues 384-670 (PDHKRDAARA…RVTPRDANYT (287 aa)) enclose the Clu domain. Residues 724–760 (IDGEANGASNSDQKSISDKQNTTAEDYAAGSSESSKS) form a disordered region. The segment covering 730–747 (GASNSDQKSISDKQNTTA) has biased composition (polar residues). TPR repeat units follow at residues 1025–1058 (AKDL…LQQV), 1067–1100 (ANCC…NERC), 1109–1142 (AHSY…LGLS), 1151–1184 (AATF…NERL), and 1193–1226 (AVCY…LVKQ). The segment at 1358–1407 (VSSEKGGENGEAKVQEKKESSENGKTENLAPAGLGAGLTSLDKKKQKAKK) is disordered. Residues 1362 to 1382 (KGGENGEAKVQEKKESSENGK) are compositionally biased toward basic and acidic residues.

It belongs to the CLU family.

Its subcellular location is the cytoplasm. Its function is as follows. mRNA-binding protein involved in proper cytoplasmic distribution of mitochondria. Together with REC2, REC3 and FMT/CLU, contributes to the establishment of the cellular volume devoted to the chloroplast compartment. This is Clustered mitochondria protein from Arabidopsis thaliana (Mouse-ear cress).